The chain runs to 532 residues: MEVQRNFFIFAFLFVSFLLWQAWQSQMFLNKKTNEKIDPIFHFIDVKKNKKKIFIKNDVISLVVNMYGGDVEEASLLAYKDTLYSSRPFKLLETGSDFIYQAQSGLIGKDGPDSSINDSRPLYSANKNFFVLGPNEKELRVPIKWVSKNGVIYKKTFILKPNRYDVQIEYDVYNPSKESLNMNIFGQIKQTINLPKKRNVYSGNFALQTFRGAAYSSDDNKYEKYKFDMIANNKNLHIMTESGWIAMLQQYFAVAWIPDNLGKNTIYTSSLDHDTAVIGYKSPIINIPPNSRSIIKSKLWIGPEIQKEMKLVAPNLDLTVDYGWLWFLSQPLFKLLTILYSIIGNWGFSIILITFIMRGLTYPLTKAQYISMAKMRALQPKIQEIKEKFSKDKQRISQEMILLYKKEKINPLGGFLPIFIQMPIFLSLYYMLIGSVELRHAPFLLWIHDLSSQDPYYVLPVIMGLTMFFIQKISSTNHISDPLQKKIMNFMPVIFTAFFLWFPSGLVLYYIISNLVTIIQQKFILSNLEKNR.

Transmembrane regions (helical) follow at residues 7 to 27 (FFIFAFLFVSFLLWQAWQSQM), 336 to 356 (LTILYSIIGNWGFSIILITFI), 413 to 433 (GGFLPIFIQMPIFLSLYYMLI), 450 to 470 (LSSQDPYYVLPVIMGLTMFFI), and 492 to 512 (PVIFTAFFLWFPSGLVLYYII).

Belongs to the OXA1/ALB3/YidC family. Type 1 subfamily. In terms of assembly, interacts with the Sec translocase complex via SecD. Specifically interacts with transmembrane segments of nascent integral membrane proteins during membrane integration.

It is found in the cell membrane. Functionally, required for the insertion and/or proper folding and/or complex formation of integral membrane proteins into the membrane. Involved in integration of membrane proteins that insert both dependently and independently of the Sec translocase complex, as well as at least some lipoproteins. Aids folding of multispanning membrane proteins. The protein is Membrane protein insertase YidC of Buchnera aphidicola subsp. Acyrthosiphon pisum (strain 5A).